Reading from the N-terminus, the 1353-residue chain is Trifunctional purine biosynthetic protein adenosine-3 (1353 aa).

The region spanning 114 to 321 (KDFMLRHGIP…LFDVMEACCS (208 aa)) is the ATP-grasp domain. ATP is bound by residues 193-196 (EELL), glutamate 200, arginine 223, and asparagine 232. Mg(2+) contacts are provided by glutamate 291 and asparagine 293. The segment at 441–1155 (GLSYKDSGVD…QKMLSQRRKR (715 aa)) is AIRS domain. A phosphoserine mark is found at serine 814 and serine 816. A GART domain region spans residues 1153–1353 (RKRVAVLISG…ALISPEVSSQ (201 aa)). Residue 1164 to 1166 (GSN) coordinates N(1)-(5-phospho-beta-D-ribosyl)glycinamide. Residues arginine 1219, 1244–1247 (MRVL), and asparagine 1261 contribute to the (6R)-10-formyltetrahydrofolate site. Histidine 1263 (proton donor) is an active-site residue. A (6R)-10-formyltetrahydrofolate-binding site is contributed by 1295 to 1299 (DEGVD). 1325 to 1328 (HKAE) is a binding site for N(1)-(5-phospho-beta-D-ribosyl)glycinamide.

It in the N-terminal section; belongs to the GARS family. This sequence in the central section; belongs to the AIR synthase family. In the C-terminal section; belongs to the GART family. As to quaternary structure, homodimer. Requires Mg(2+) as cofactor. Mn(2+) serves as cofactor.

It catalyses the reaction 5-phospho-beta-D-ribosylamine + glycine + ATP = N(1)-(5-phospho-beta-D-ribosyl)glycinamide + ADP + phosphate + H(+). The catalysed reaction is 2-formamido-N(1)-(5-O-phospho-beta-D-ribosyl)acetamidine + ATP = 5-amino-1-(5-phospho-beta-D-ribosyl)imidazole + ADP + phosphate + H(+). It carries out the reaction N(1)-(5-phospho-beta-D-ribosyl)glycinamide + (6R)-10-formyltetrahydrofolate = N(2)-formyl-N(1)-(5-phospho-beta-D-ribosyl)glycinamide + (6S)-5,6,7,8-tetrahydrofolate + H(+). It participates in purine metabolism; IMP biosynthesis via de novo pathway; 5-amino-1-(5-phospho-D-ribosyl)imidazole from N(2)-formyl-N(1)-(5-phospho-D-ribosyl)glycinamide: step 2/2. The protein operates within purine metabolism; IMP biosynthesis via de novo pathway; N(1)-(5-phospho-D-ribosyl)glycinamide from 5-phospho-alpha-D-ribose 1-diphosphate: step 2/2. It functions in the pathway purine metabolism; IMP biosynthesis via de novo pathway; N(2)-formyl-N(1)-(5-phospho-D-ribosyl)glycinamide from N(1)-(5-phospho-D-ribosyl)glycinamide (10-formyl THF route): step 1/1. Functionally, trifunctional enzyme that catalyzes three distinct reactions as part of the 'de novo' inosine monophosphate biosynthetic pathway. The sequence is that of Trifunctional purine biosynthetic protein adenosine-3 from Drosophila melanogaster (Fruit fly).